Here is a 90-residue protein sequence, read N- to C-terminus: Glycine and tyrosine-rich protein (90 aa).

A signal peptide spans 1-21 (MRRSVLVVFLVLAVTNVAVEA).

Prismatic layer of shell (at protein level).

Its subcellular location is the secreted. In Pinctada maxima (Silver-lipped pearl oyster), this protein is Glycine and tyrosine-rich protein.